The following is a 252-amino-acid chain: ATP synthase subunit a (252 aa).

The next 6 membrane-spanning stretches (helical) occupy residues 29 to 49, 87 to 107, 116 to 136, 146 to 166, 183 to 205, and 219 to 239; these read FTNVSFFIIATVVATSVFLFI, FFPLVFSLFTFILVANFIGLF, QIMITFSLAMLVILTVVGYGF, LFVPSGVPVVILPLVTMIEVI, MLAGHITLKVFSGFIVSMIELGI, and VAITALEFLVAFLQAYVFTVL.

The protein belongs to the ATPase A chain family. In terms of assembly, F-type ATPases have 2 components, CF(1) - the catalytic core - and CF(0) - the membrane proton channel. CF(1) has five subunits: alpha(3), beta(3), gamma(1), delta(1), epsilon(1). CF(0) has three main subunits: a(1), b(2) and c(9-12). The alpha and beta chains form an alternating ring which encloses part of the gamma chain. CF(1) is attached to CF(0) by a central stalk formed by the gamma and epsilon chains, while a peripheral stalk is formed by the delta and b chains.

The protein resides in the cell inner membrane. Functionally, key component of the proton channel; it plays a direct role in the translocation of protons across the membrane. The polypeptide is ATP synthase subunit a (Bartonella quintana (strain Toulouse) (Rochalimaea quintana)).